An 83-amino-acid chain; its full sequence is Cytochrome c oxidase subunit 7A2, mitochondrial (83 aa).

Residues 1–23 constitute a mitochondrion transit peptide; the sequence is MLRNLLALRQIAKRTISTSSRRQ. The Mitochondrial matrix segment spans residues 24–48; it reads FENKVPEKQKLFQEDNGIPVHLKGG. Lysine 33 bears the N6-acetyllysine mark. A helical membrane pass occupies residues 49-77; that stretch reads IADALLYRATLILTVGGTAYAMYELAVAS. The Mitochondrial intermembrane portion of the chain corresponds to 78–83; sequence FPKKQD.

The protein belongs to the cytochrome c oxidase VIIa family. As to quaternary structure, component of the cytochrome c oxidase (complex IV, CIV), a multisubunit enzyme composed of 14 subunits. The complex is composed of a catalytic core of 3 subunits MT-CO1, MT-CO2 and MT-CO3, encoded in the mitochondrial DNA, and 11 supernumerary subunits COX4I1 (or COX4I2), COX5A, COX5B, COX6A2 (or COX6A1), COX6B1 (or COX6B2), COX6C, COX7A1 (or COX7A2), COX7B, COX7C, COX8B and NDUFA4, which are encoded in the nuclear genome. The complex exists as a monomer or a dimer and forms supercomplexes (SCs) in the inner mitochondrial membrane with NADH-ubiquinone oxidoreductase (complex I, CI) and ubiquinol-cytochrome c oxidoreductase (cytochrome b-c1 complex, complex III, CIII), resulting in different assemblies (supercomplex SCI(1)III(2)IV(1) and megacomplex MCI(2)III(2)IV(2)). Interacts with PET100.

The protein resides in the mitochondrion inner membrane. The protein operates within energy metabolism; oxidative phosphorylation. Its function is as follows. Component of the cytochrome c oxidase, the last enzyme in the mitochondrial electron transport chain which drives oxidative phosphorylation. The respiratory chain contains 3 multisubunit complexes succinate dehydrogenase (complex II, CII), ubiquinol-cytochrome c oxidoreductase (cytochrome b-c1 complex, complex III, CIII) and cytochrome c oxidase (complex IV, CIV), that cooperate to transfer electrons derived from NADH and succinate to molecular oxygen, creating an electrochemical gradient over the inner membrane that drives transmembrane transport and the ATP synthase. Cytochrome c oxidase is the component of the respiratory chain that catalyzes the reduction of oxygen to water. Electrons originating from reduced cytochrome c in the intermembrane space (IMS) are transferred via the dinuclear copper A center (CU(A)) of subunit 2 and heme A of subunit 1 to the active site in subunit 1, a binuclear center (BNC) formed by heme A3 and copper B (CU(B)). The BNC reduces molecular oxygen to 2 water molecules using 4 electrons from cytochrome c in the IMS and 4 protons from the mitochondrial matrix. This is Cytochrome c oxidase subunit 7A2, mitochondrial (COX7A2) from Bos taurus (Bovine).